The chain runs to 230 residues: MSGKENNFPPLPKFIPLKPCFYQNFSDEIPIEHQVLVKRIYRLWLFYCATLGVNLVACLAWWIAGGSGANFGLALLWLLLFSPCGYVCWFRPAYKAFRSDSSFNFMAFFFIFGAQFILTIIQAVGFSGWGACGWLAAIGFFQTSVGAAVVMLLPAIMFSMSAAMMAVMIMKVHSIYRGTGGSFQKAQTEWSTGTWRNPPSREAQFNNFSGNSLPEYPTVPSYPASGGQWP.

At 1–39 the chain is on the cytoplasmic side; that stretch reads MSGKENNFPPLPKFIPLKPCFYQNFSDEIPIEHQVLVKR. Helical transmembrane passes span 40–60, 61–81, 105–125, and 149–169; these read IYRL…ACLA, WWIA…LLLF, FMAF…QAVG, and VVML…AVMI. The Cytoplasmic portion of the chain corresponds to 170–230; the sequence is MKVHSIYRGT…SYPASGGQWP (61 aa). Residue threonine 194 is modified to Phosphothreonine. The interval 208 to 230 is disordered; sequence FSGNSLPEYPTVPSYPASGGQWP.

Belongs to the SCAMP family.

The protein resides in the membrane. Functionally, probably involved in membrane protein trafficking. The sequence is that of Secretory carrier-associated membrane protein 4 (SCAMP4) from Bos taurus (Bovine).